The sequence spans 186 residues: Ribosome-recycling factor (186 aa).

It belongs to the RRF family.

It localises to the cytoplasm. Functionally, responsible for the release of ribosomes from messenger RNA at the termination of protein biosynthesis. May increase the efficiency of translation by recycling ribosomes from one round of translation to another. This chain is Ribosome-recycling factor, found in Polaromonas sp. (strain JS666 / ATCC BAA-500).